The primary structure comprises 364 residues: Selection and upkeep of intraepithelial T-cells protein 11 (364 aa).

A signal peptide spans 1–28; the sequence is MEPSASCLPGFFMVCILLKITVLTQVMS. One can recognise an Ig-like V-type domain in the interval 29-118; the sequence is LDIQINTQIP…TNQEKRRSII (90 aa). Residues 29–138 are Extracellular-facing; it reads LDIQINTQIP…MSLMSNNLLY (110 aa). A disulfide bond links Cys-48 and Cys-102. A helical membrane pass occupies residues 139–159; it reads LGIYLIFILFLNFLKGILFCL. At 160 to 186 the chain is on the cytoplasmic side; sequence TKRLVHFRKRMIKIKKVWSNKTRACCP. Residues 187–207 traverse the membrane as a helical segment; that stretch reads LIWEFLEIVLFIAFLPLYLMF. At 208–230 the chain is on the extracellular side; it reads RIRVFTLDEAHILYNNWLWKVCK. A helical transmembrane segment spans residues 231 to 251; the sequence is TLIAMMILFTVLILFLLWTLN. The Cytoplasmic segment spans residues 252-364; sequence RYGKMPCLSS…LYSKLGNLTH (113 aa).

The protein belongs to the SKINT family. Expressed in skin and thymus.

It localises to the membrane. May act by engaging a cell surface molecule on immature T-cells in the embryonic thymus. The protein is Selection and upkeep of intraepithelial T-cells protein 11 (Skint11) of Mus musculus (Mouse).